We begin with the raw amino-acid sequence, 312 residues long: DNA-directed RNA polymerase subunit alpha (312 aa).

Positions 1 to 226 (MIEFEKPIIT…EHLNLFTDLT (226 aa)) are alpha N-terminal domain (alpha-NTD). The alpha C-terminal domain (alpha-CTD) stretch occupies residues 242-312 (NDEKVLDRTI…DLGLGLKNDK (71 aa)).

It belongs to the RNA polymerase alpha chain family. Homodimer. The RNAP catalytic core consists of 2 alpha, 1 beta, 1 beta' and 1 omega subunit. When a sigma factor is associated with the core the holoenzyme is formed, which can initiate transcription.

The enzyme catalyses RNA(n) + a ribonucleoside 5'-triphosphate = RNA(n+1) + diphosphate. In terms of biological role, DNA-dependent RNA polymerase catalyzes the transcription of DNA into RNA using the four ribonucleoside triphosphates as substrates. In Streptococcus agalactiae serotype Ia (strain ATCC 27591 / A909 / CDC SS700), this protein is DNA-directed RNA polymerase subunit alpha.